Reading from the N-terminus, the 1368-residue chain is DNA-directed RNA polymerase subunit beta (1368 aa).

This sequence belongs to the RNA polymerase beta chain family. In terms of assembly, the RNAP catalytic core consists of 2 alpha, 1 beta, 1 beta' and 1 omega subunit. When a sigma factor is associated with the core the holoenzyme is formed, which can initiate transcription.

The enzyme catalyses RNA(n) + a ribonucleoside 5'-triphosphate = RNA(n+1) + diphosphate. Functionally, DNA-dependent RNA polymerase catalyzes the transcription of DNA into RNA using the four ribonucleoside triphosphates as substrates. This Burkholderia pseudomallei (strain K96243) protein is DNA-directed RNA polymerase subunit beta.